The following is a 640-amino-acid chain: Ribonuclease J (640 aa).

Residues histidine 75, histidine 77, aspartate 79, histidine 80, histidine 145, and aspartate 167 each contribute to the Zn(2+) site. Substrate is bound at residue 368–372 (HVSGH). Histidine 394 serves as a coordination point for Zn(2+). Positions 578–640 (TVSATSATPA…RKRSTTSVSS (63 aa)) are disordered. Positions 598–610 (PEPKVKAKPEKKV) are enriched in basic and acidic residues.

This sequence belongs to the metallo-beta-lactamase superfamily. RNA-metabolizing metallo-beta-lactamase-like family. Bacterial RNase J subfamily. In terms of assembly, homodimer, may be a subunit of the RNA degradosome. Zn(2+) serves as cofactor.

It is found in the cytoplasm. In terms of biological role, an RNase that has 5'-3' exonuclease and possibly endoonuclease activity. Involved in maturation of rRNA and in some organisms also mRNA maturation and/or decay. The polypeptide is Ribonuclease J (Synechocystis sp. (strain ATCC 27184 / PCC 6803 / Kazusa)).